The chain runs to 212 residues: Thymidylate kinase (212 aa).

ATP is bound at residue 11-18 (GMEGAGKS).

Belongs to the thymidylate kinase family.

It carries out the reaction dTMP + ATP = dTDP + ADP. Phosphorylation of dTMP to form dTDP in both de novo and salvage pathways of dTTP synthesis. The polypeptide is Thymidylate kinase (Colwellia psychrerythraea (strain 34H / ATCC BAA-681) (Vibrio psychroerythus)).